The following is a 310-amino-acid chain: Malate dehydrogenase (310 aa).

NAD(+) is bound by residues 7-13 (GAAGGIG) and Asp-34. Residues Arg-81 and Arg-87 each coordinate substrate. NAD(+) is bound by residues Asn-94 and 117–119 (ITN). The substrate site is built by Asn-119 and Arg-153. The Proton acceptor role is filled by His-177. Met-227 provides a ligand contact to NAD(+).

The protein belongs to the LDH/MDH superfamily. MDH type 1 family. Homodimer.

The catalysed reaction is (S)-malate + NAD(+) = oxaloacetate + NADH + H(+). Functionally, catalyzes the reversible oxidation of malate to oxaloacetate. The polypeptide is Malate dehydrogenase (Pseudoalteromonas translucida (strain TAC 125)).